The chain runs to 211 residues: ATP phosphoribosyltransferase (211 aa).

Belongs to the ATP phosphoribosyltransferase family. Short subfamily. In terms of assembly, heteromultimer composed of HisG and HisZ subunits.

The protein localises to the cytoplasm. It catalyses the reaction 1-(5-phospho-beta-D-ribosyl)-ATP + diphosphate = 5-phospho-alpha-D-ribose 1-diphosphate + ATP. The protein operates within amino-acid biosynthesis; L-histidine biosynthesis; L-histidine from 5-phospho-alpha-D-ribose 1-diphosphate: step 1/9. Functionally, catalyzes the condensation of ATP and 5-phosphoribose 1-diphosphate to form N'-(5'-phosphoribosyl)-ATP (PR-ATP). Has a crucial role in the pathway because the rate of histidine biosynthesis seems to be controlled primarily by regulation of HisG enzymatic activity. The sequence is that of ATP phosphoribosyltransferase from Pseudomonas paraeruginosa (strain DSM 24068 / PA7) (Pseudomonas aeruginosa (strain PA7)).